The primary structure comprises 394 residues: Protein TsgA homolog (394 aa).

12 helical membrane passes run tryptophan 11–methionine 31, phenylalanine 51–proline 71, leucine 76–leucine 96, isoleucine 101–isoleucine 121, leucine 134–isoleucine 154, tryptophan 162–cysteine 182, methionine 206–isoleucine 226, glutamine 246–leucine 266, isoleucine 274–asparagine 294, isoleucine 302–leucine 322, phenylalanine 334–valine 354, and leucine 363–phenylalanine 383.

This sequence belongs to the major facilitator superfamily. TsgA family.

It is found in the cell inner membrane. The polypeptide is Protein TsgA homolog (Yersinia enterocolitica serotype O:8 / biotype 1B (strain NCTC 13174 / 8081)).